Reading from the N-terminus, the 233-residue chain is Large ribosomal subunit protein uL1 (233 aa).

This sequence belongs to the universal ribosomal protein uL1 family. As to quaternary structure, part of the 50S ribosomal subunit.

Binds directly to 23S rRNA. The L1 stalk is quite mobile in the ribosome, and is involved in E site tRNA release. In terms of biological role, protein L1 is also a translational repressor protein, it controls the translation of the L11 operon by binding to its mRNA. The sequence is that of Large ribosomal subunit protein uL1 from Campylobacter concisus (strain 13826).